Here is a 125-residue protein sequence, read N- to C-terminus: uncharacterized protein (125 aa).

Residues 1 to 46 (MFFDTKVLNYPTIHKSISMASTMQRTSSSAASNERQLSQLQRRAPS) constitute a chloroplast transit peptide.

The protein localises to the plastid. Its subcellular location is the chloroplast. This is an uncharacterized protein from Arabidopsis thaliana (Mouse-ear cress).